Consider the following 188-residue polypeptide: CASP-like protein 4B1 (188 aa).

Over residues 1-11 (MTNPDKQKPVE) the composition is skewed to basic and acidic residues. Residues 1 to 34 (MTNPDKQKPVEVTDVETAAEKTSEPTPASGTSTI) are disordered. Residues 1–46 (MTNPDKQKPVEVTDVETAAEKTSEPTPASGTSTITQRWKREDLIKK) are Cytoplasmic-facing. Residues 24–34 (EPTPASGTSTI) show a composition bias toward polar residues. Residues 47–67 (ASPITRGICLLFSLLAFLIMV) traverse the membrane as a helical segment. The Extracellular segment spans residues 68 to 84 (SNKHGYGRNFNEYEEYR). Residues 85–105 (YVLAISIISTLYTAWQTFAHF) traverse the membrane as a helical segment. The Cytoplasmic portion of the chain corresponds to 106–120 (SKREFFDRRTSTLVD). Residues 121–141 (FSGDQIVAYLLISAASSAIPL) form a helical membrane-spanning segment. Topologically, residues 142 to 156 (TNRFREGQDNIFTDS) are extracellular. Residues 157–177 (AASAISMAIFAFVALALSALF) traverse the membrane as a helical segment. At 178 to 188 (SGYKLSTHSFI) the chain is on the cytoplasmic side.

Belongs to the Casparian strip membrane proteins (CASP) family. As to quaternary structure, homodimer and heterodimers.

It is found in the cell membrane. The chain is CASP-like protein 4B1 from Arabidopsis lyrata subsp. lyrata (Lyre-leaved rock-cress).